The chain runs to 70 residues: Conotoxin Lt11.6 (70 aa).

Positions 1–26 (MMFRLTSVGSFLLVIVFLNLVVLTNA) are cleaved as a signal peptide. Disulfide bonds link Cys27–Cys41, Cys34–Cys46, Cys40–Cys50, and Cys45–Cys54. The propeptide occupies 58 to 70 (AQRQKLLRSFGQR).

Belongs to the conotoxin I2 superfamily. In terms of tissue distribution, expressed by the venom duct.

It is found in the secreted. In Conus litteratus (Lettered cone), this protein is Conotoxin Lt11.6.